Reading from the N-terminus, the 933-residue chain is Bifunctional uridylyltransferase/uridylyl-removing enzyme (933 aa).

Residues 1-390 (MLSTRAASAD…RLAALARRKD (390 aa)) are uridylyltransferase. The uridylyl-removing stretch occupies residues 391–745 (VDGFVVDGER…TRIDRGRAIT (355 aa)). The HD domain maps to 506–628 (VDEHTLFALG…VQSPERLRLL (123 aa)). ACT domains are found at residues 746-829 (EVTI…DLTK) and 859-933 (VIEV…DPSA).

This sequence belongs to the GlnD family. It depends on Mg(2+) as a cofactor.

It catalyses the reaction [protein-PII]-L-tyrosine + UTP = [protein-PII]-uridylyl-L-tyrosine + diphosphate. The catalysed reaction is [protein-PII]-uridylyl-L-tyrosine + H2O = [protein-PII]-L-tyrosine + UMP + H(+). Its activity is regulated as follows. Uridylyltransferase (UTase) activity is inhibited by glutamine, while glutamine activates uridylyl-removing (UR) activity. Uridylylation process is dependent on ATP and 2-oxoglutarate, which are effector molecules that likely bind to PII proteins and control their activity. Its function is as follows. Modifies, by uridylylation and deuridylylation, the PII regulatory proteins GlnB and GlnZ, in response to the nitrogen status of the cell that GlnD senses through the glutamine level. Under low glutamine levels, catalyzes the conversion of the PII proteins and UTP to PII-UMP and PPi, while under higher glutamine levels, GlnD hydrolyzes PII-UMP to PII and UMP (deuridylylation). Thus, controls uridylylation state and activity of the PII proteins, and plays an important role in the regulation of nitrogen fixation and metabolism. The chain is Bifunctional uridylyltransferase/uridylyl-removing enzyme from Azospirillum brasilense.